A 291-amino-acid chain; its full sequence is Lipoyl synthase (291 aa).

7 residues coordinate [4Fe-4S] cluster: Cys43, Cys48, Cys54, Cys69, Cys73, Cys76, and Ser280. The Radical SAM core domain occupies Phe55 to Pro269.

Belongs to the radical SAM superfamily. Lipoyl synthase family. The cofactor is [4Fe-4S] cluster.

Its subcellular location is the cytoplasm. It catalyses the reaction [[Fe-S] cluster scaffold protein carrying a second [4Fe-4S](2+) cluster] + N(6)-octanoyl-L-lysyl-[protein] + 2 oxidized [2Fe-2S]-[ferredoxin] + 2 S-adenosyl-L-methionine + 4 H(+) = [[Fe-S] cluster scaffold protein] + N(6)-[(R)-dihydrolipoyl]-L-lysyl-[protein] + 4 Fe(3+) + 2 hydrogen sulfide + 2 5'-deoxyadenosine + 2 L-methionine + 2 reduced [2Fe-2S]-[ferredoxin]. Its pathway is protein modification; protein lipoylation via endogenous pathway; protein N(6)-(lipoyl)lysine from octanoyl-[acyl-carrier-protein]: step 2/2. Catalyzes the radical-mediated insertion of two sulfur atoms into the C-6 and C-8 positions of the octanoyl moiety bound to the lipoyl domains of lipoate-dependent enzymes, thereby converting the octanoylated domains into lipoylated derivatives. This chain is Lipoyl synthase, found in Oleidesulfovibrio alaskensis (strain ATCC BAA-1058 / DSM 17464 / G20) (Desulfovibrio alaskensis).